The sequence spans 329 residues: GMP reductase (329 aa).

The active-site Thioimidate intermediate is Cys178. NADP(+) is bound at residue 207–230 (VIADGGIRTHGDIAKSIRMGATMV).

Belongs to the IMPDH/GMPR family. GuaC type 2 subfamily.

It carries out the reaction IMP + NH4(+) + NADP(+) = GMP + NADPH + 2 H(+). Catalyzes the irreversible NADPH-dependent deamination of GMP to IMP. It functions in the conversion of nucleobase, nucleoside and nucleotide derivatives of G to A nucleotides, and in maintaining the intracellular balance of A and G nucleotides. The polypeptide is GMP reductase (Lactococcus lactis subsp. lactis (strain IL1403) (Streptococcus lactis)).